Here is a 268-residue protein sequence, read N- to C-terminus: Putative hydro-lyase A1S_1268 (268 aa).

This sequence belongs to the D-glutamate cyclase family.

This is Putative hydro-lyase A1S_1268 from Acinetobacter baumannii (strain ATCC 17978 / DSM 105126 / CIP 53.77 / LMG 1025 / NCDC KC755 / 5377).